The chain runs to 249 residues: E3 ubiquitin-protein ligase RMA1 (249 aa).

The segment at 48–97 (CNICLDSVQEPVVTLCGHLFCWPCIHKWLDVQSFSTSDEYQRHRQCPVCK) adopts an RING-type zinc-finger fold. The helical; Anchor for type IV membrane protein transmembrane segment at 231-248 (LGRIFFFFMCCVVLCLLL) threads the bilayer.

In terms of tissue distribution, ubiquitous. Highly expressed in roots.

It is found in the endoplasmic reticulum membrane. The catalysed reaction is S-ubiquitinyl-[E2 ubiquitin-conjugating enzyme]-L-cysteine + [acceptor protein]-L-lysine = [E2 ubiquitin-conjugating enzyme]-L-cysteine + N(6)-ubiquitinyl-[acceptor protein]-L-lysine.. It participates in protein modification; protein ubiquitination. In terms of biological role, E3 ubiquitin-protein ligase that promotes the ubiquitination and proteasomal degradation of aquaporin PIP2-1. Forms a ubiquitin ligase complex in cooperation with the E2 enzymes UCB8/UCB10. This is E3 ubiquitin-protein ligase RMA1 (RMA1) from Arabidopsis thaliana (Mouse-ear cress).